The chain runs to 354 residues: NADH-quinone oxidoreductase subunit H (354 aa).

The next 8 membrane-spanning stretches (helical) occupy residues 22 to 42, 91 to 111, 124 to 144, 168 to 188, 203 to 223, 255 to 275, 291 to 311, and 326 to 346; these read ILIR…YLIL, YLIA…VIPF, LLYV…AGWA, MGFA…SAIV, ILSW…ISGV, LFFL…ALMF, IPGF…FIWI, and LGWK…AIWI.

The protein belongs to the complex I subunit 1 family. As to quaternary structure, NDH-1 is composed of 14 different subunits. Subunits NuoA, H, J, K, L, M, N constitute the membrane sector of the complex.

It localises to the cell inner membrane. The catalysed reaction is a quinone + NADH + 5 H(+)(in) = a quinol + NAD(+) + 4 H(+)(out). Its function is as follows. NDH-1 shuttles electrons from NADH, via FMN and iron-sulfur (Fe-S) centers, to quinones in the respiratory chain. The immediate electron acceptor for the enzyme in this species is believed to be ubiquinone. Couples the redox reaction to proton translocation (for every two electrons transferred, four hydrogen ions are translocated across the cytoplasmic membrane), and thus conserves the redox energy in a proton gradient. This subunit may bind ubiquinone. The protein is NADH-quinone oxidoreductase subunit H of Cupriavidus taiwanensis (strain DSM 17343 / BCRC 17206 / CCUG 44338 / CIP 107171 / LMG 19424 / R1) (Ralstonia taiwanensis (strain LMG 19424)).